A 935-amino-acid chain; its full sequence is Potassium channel AKT1 (935 aa).

Residues 1–106 lie on the Cytoplasmic side of the membrane; the sequence is MARWGAARMA…YDRRYRIWET (106 aa). A helical membrane pass occupies residues 107 to 127; sequence FLIVLVVYSAWVSPFEFGFIP. Residues 128–136 lie on the Extracellular side of the membrane; the sequence is KPTGALATA. The helical transmembrane segment at 137–157 threads the bilayer; sequence DNVVNAFFAVDIILTFFVAYL. Topologically, residues 158–178 are cytoplasmic; that stretch reads DKMSYMLEDDPKKIAWRYSTT. The chain crosses the membrane as a helical span at residues 179–199; it reads WLVLDVASTIPSEFARRILPS. The Extracellular segment spans residues 200 to 205; sequence KLRSYG. A helical; Voltage-sensor membrane pass occupies residues 206–226; that stretch reads FFNMLRLWRLRRVSSLFSRLE. The Cytoplasmic segment spans residues 227 to 240; that stretch reads KDRHFNYFWVRCAK. The helical transmembrane segment at 241–261 threads the bilayer; that stretch reads LICVTLFAVHCAACFYYLLAD. At 262–288 the chain is on the extracellular side; sequence RYPVPTSTWIGNYMADFHERSLWIRYV. Positions 289 to 308 form an intramembrane region, pore-forming; sequence TSVYWSITTLTTVGYGDLHA. Topologically, residues 309–312 are extracellular; that stretch reads ENTR. A helical membrane pass occupies residues 313–333; sequence EMIFNIFYMLFNLGLTAYLIG. Residues 334-935 lie on the Cytoplasmic side of the membrane; the sequence is NMTNLVVHGT…WDAEKMKGKS (602 aa). Residue 419-538 participates in a nucleoside 3',5'-cyclic phosphate binding; it reads LFQGVSNDLI…TIIMNNLIQF (120 aa). ANK repeat units follow at residues 565-594, 598-627, 631-660, 662-691, 695-724, and 728-757; these read DLPI…DPNE, DGHT…DPNA, EGKV…DLSS, DTGL…DVNR, DGTT…DIDK, and NGWT…ATAS. Positions 826 to 854 are disordered; sequence SQAQRETDHPLSRGGLAATGSPNPSSGSR. Residues 845 to 854 are compositionally biased toward polar residues; the sequence is GSPNPSSGSR. Residues 859–935 enclose the KHA domain; it reads RVTISCPEKG…WDAEKMKGKS (77 aa).

This sequence belongs to the potassium channel family. Plant (TC 1.A.1.4) subfamily. As to quaternary structure, the potassium channel is probably a homo- or heterotetrameric complex of pore-forming subunits. Highly expressed in the epidermis and endodermis of roots, and at lower level in cells of the vasculature and the cortex. Expressed in xylem parenchyma, phloem and mesophyll cells of leaves.

The protein resides in the membrane. Functionally, highly selective inward-rectifying potassium channel that mediates potassium uptake by plant roots. The sequence is that of Potassium channel AKT1 (AKT1) from Oryza sativa subsp. indica (Rice).